A 377-amino-acid chain; its full sequence is Protein-tyrosine sulfotransferase 2 (377 aa).

Topologically, residues 1–8 are cytoplasmic; that stretch reads MRLSVRRV. The helical; Signal-anchor for type II membrane protein transmembrane segment at 9–25 threads the bilayer; it reads LLAAGCALVLVLAVQLG. Topologically, residues 26–377 are lumenal; that stretch reads QQVLECRAVL…NSTSSHLGSS (352 aa). Residue 78–82 coordinates 3'-phosphoadenylyl sulfate; it reads RSGTT. Residues Cys96 and Cys156 are joined by a disulfide bond. The Proton donor/acceptor role is filled by Glu99. The interaction with peptide substrate stretch occupies residues 101–105; it reads RIIPR. 3'-phosphoadenylyl sulfate-binding residues include Arg183, Ser191, and Arg195. Residues Cys225 and Cys233 are joined by a disulfide bond. 3'-phosphoadenylyl sulfate is bound by residues Tyr238, 285 to 294, and Lys300; that span reads STDQVIKPVN. Residues Asn343 and Asn368 are each glycosylated (N-linked (GlcNAc...) asparagine).

It belongs to the protein sulfotransferase family. Homodimer. Can also form heterodimers with TPST1. N-glycosylated. Widely expressed.

The protein localises to the golgi apparatus membrane. The enzyme catalyses L-tyrosyl-[protein] + 3'-phosphoadenylyl sulfate = O-sulfo-L-tyrosine-[protein] + adenosine 3',5'-bisphosphate + H(+). In terms of biological role, catalyzes the O-sulfation of tyrosine residues within acidic motifs of polypeptides, using 3'-phosphoadenylyl sulfate (PAPS) as cosubstrate. The polypeptide is Protein-tyrosine sulfotransferase 2 (TPST2) (Homo sapiens (Human)).